Here is a 467-residue protein sequence, read N- to C-terminus: Stromal membrane-associated protein 1 (467 aa).

The Arf-GAP domain occupies 18-136 (QLILSKLLRE…KYYDKNAIAI (119 aa)). The segment at 33 to 56 (CADCEAKGPRWASWNIGVFICIRC) adopts a C4-type zinc-finger fold. A compositionally biased stretch (polar residues) spans 145 to 155 (PLQPLVSSPSL). Disordered regions lie at residues 145–224 (PLQP…LDGP) and 408–467 (KFGL…QLWK). Composition is skewed to basic and acidic residues over residues 160-185 (DKNK…EKPA) and 192-204 (KLQK…EPKK). The Interaction with clathrin heavy chains motif lies at 218–222 (LLGLD). Polar residues predominate over residues 413 to 438 (QAQQPQWSLSQMNQQMAGMSISSATP). Low complexity predominate over residues 446-467 (SSTTAGWSGSSSGQTLSTQLWK).

As to quaternary structure, interacts with ARF6. Interacts with clathrin heavy chains via the clathrin box-like motif. Detected in bone marrow, adrenal gland, trachea, lymph node, spinal cord, peripheral blood leukocytes, thyroid and stomach.

It localises to the cell membrane. GTPase activating protein that acts on ARF6. Plays a role in clathrin-dependent endocytosis. May play a role in erythropoiesis. The chain is Stromal membrane-associated protein 1 (SMAP1) from Homo sapiens (Human).